The chain runs to 811 residues: MTRKLITAALPYVNNVPHLGNLIQGLSADVFARFCRMRGYHTCFVCGTDEYGTASETRAAEQGLSPAQLCAHYHALHRDIYQWFDLSFDYFGRTTSDAHTELTQALFRHLDARGFISEHESAQAYCLHCARFLADRYLRGTCPHCRNAEARADQCEHCGVLLEPETLLNARCVSCGTAPEFRPTRHLYLNLPALEKAYRSWFCTTNHLWTKNAVRMTEGWLRTGLQERAITRDLRWGVPVPKAGFEQKVFYVWFDAPVGYISITKCGTEAASSQEGGGTDDGVKEKWQSWWLDQQDVELVQFVGKDNIPFHTLFFPCMLIGSGQRWTMLTRLSATEYLNYEGGKFSKSLGVGVFGSDAKESGIPSDLWRFYLLYHRPEKSDAHFTWHEFQERVNSELIGNLCNLVNRTLTFVARTYGGVVPAQDGARSTRAQVMEETLALREAVRNTAKRMTDLMEQVQLREAFREVFALSARANKALQDGAPWKTRAQDRERADALMRELCYVIRDVLILAHPFLPWYTQQAARFLGVQLSSCAPEGGGAVCAAKKDADTAQPDTVQPTLRWSDVGERKGLTQVHPPVILFRPLETETIAAYRARYAGTARDGAGVSVPRTAQMPTGMNKKETDAQQKKEEREMPPPSDTARLSAFFSERVVLKVARVLQVERHPNADMLFVETLDDGSGVERVIVSGLVPYMAADALRGAHVLIVDNLQPRSLRGVRSCGMLLAAEYVDAQGTKAIELVQAPWALPGERATLASAPPVITPHGSAVIDADAFFSVPIRVVNYAVEVAGEPLMVGGRPLVMQRVKEGTVG.

A 'HIGH' region motif is present at residues 11-21 (PYVNNVPHLGN). Positions 142, 145, 155, and 158 each coordinate Zn(2+). The 'KMSKS' region signature appears at 344–348 (KFSKS). Lys347 contacts ATP. A disordered region spans residues 606–640 (GVSVPRTAQMPTGMNKKETDAQQKKEEREMPPPSD). Basic and acidic residues predominate over residues 620-635 (NKKETDAQQKKEEREM). In terms of domain architecture, tRNA-binding spans 648–753 (FSERVVLKVA…PWALPGERAT (106 aa)).

Belongs to the class-I aminoacyl-tRNA synthetase family. MetG type 1 subfamily. Homodimer. Requires Zn(2+) as cofactor.

The protein resides in the cytoplasm. The catalysed reaction is tRNA(Met) + L-methionine + ATP = L-methionyl-tRNA(Met) + AMP + diphosphate. Is required not only for elongation of protein synthesis but also for the initiation of all mRNA translation through initiator tRNA(fMet) aminoacylation. The protein is Methionine--tRNA ligase of Treponema pallidum (strain Nichols).